Consider the following 320-residue polypeptide: Large ribosomal subunit protein uL10y (320 aa).

The segment at 289–320 (AGGGAPAAAKVEEKEESDEEDYGGDFGLFDEE) is disordered. Acidic residues predominate over residues 302-320 (KEESDEEDYGGDFGLFDEE). A Phosphoserine modification is found at Ser305. Phosphotyrosine is present on Tyr310.

It belongs to the universal ribosomal protein uL10 family. In terms of assembly, P0 forms a pentameric complex by interaction with dimers of P1 and P2.

Functionally, ribosomal protein P0 is the functional equivalent of E.coli protein L10. The chain is Large ribosomal subunit protein uL10y (RPP0B) from Arabidopsis thaliana (Mouse-ear cress).